The following is a 216-amino-acid chain: Pyrophosphatase PpaX (216 aa).

Residue Asp-9 is the Nucleophile of the active site.

This sequence belongs to the HAD-like hydrolase superfamily. PpaX family. It depends on Mg(2+) as a cofactor.

It catalyses the reaction diphosphate + H2O = 2 phosphate + H(+). In terms of biological role, hydrolyzes pyrophosphate formed during P-Ser-HPr dephosphorylation by HPrK/P. Might play a role in controlling the intracellular pyrophosphate pool. This chain is Pyrophosphatase PpaX, found in Bacillus cereus (strain ATCC 10987 / NRS 248).